A 213-amino-acid polypeptide reads, in one-letter code: Phosphoheptose isomerase (213 aa).

In terms of domain architecture, SIS spans 50-208 (MAETFEGGGR…IDLVERMLGY (159 aa)). Substrate is bound at residue 65–67 (NGG). Histidine 74 and glutamate 78 together coordinate Zn(2+). Residues glutamate 78, 109-110 (ND), 135-137 (STS), serine 140, and glutamine 188 contribute to the substrate site. The Zn(2+) site is built by glutamine 188 and histidine 196.

Belongs to the SIS family. GmhA subfamily. It depends on Zn(2+) as a cofactor.

It localises to the cytoplasm. It catalyses the reaction 2 D-sedoheptulose 7-phosphate = D-glycero-alpha-D-manno-heptose 7-phosphate + D-glycero-beta-D-manno-heptose 7-phosphate. Its pathway is carbohydrate biosynthesis; D-glycero-D-manno-heptose 7-phosphate biosynthesis; D-glycero-alpha-D-manno-heptose 7-phosphate and D-glycero-beta-D-manno-heptose 7-phosphate from sedoheptulose 7-phosphate: step 1/1. Its function is as follows. Catalyzes the isomerization of sedoheptulose 7-phosphate in D-glycero-D-manno-heptose 7-phosphate. This chain is Phosphoheptose isomerase, found in Chlorobium phaeovibrioides (strain DSM 265 / 1930) (Prosthecochloris vibrioformis (strain DSM 265)).